We begin with the raw amino-acid sequence, 432 residues long: Cyclic GMP-AMP synthase (432 aa).

110–115 (QGSFQY) serves as a coordination point for GTP. 2 residues coordinate Mg(2+): Asp129 and Asp131. Residue Arg180 participates in ATP binding. Asp191 contacts Mg(2+). ATP is bound at residue Ser255. Lys283, Ser297, and Asp344 together coordinate GTP. A Glycyl cysteine dithioester (Gly-Cys) (interchain with C-13 in Cap2) cross-link involves residue Gly432. A Glycyl cysteine dithioester (Gly-Cys) (interchain with C-493 in Cap2) cross-link involves residue Gly432. Residue Gly432 forms a Glycyl cysteine dithioester (Gly-Cys) (interchain with C-513 in Cap2) linkage. Gly432 is covalently cross-linked (Glycyl lysine isopeptide (Gly-Lys) (interchain with K-? in acceptor proteins)).

The protein belongs to the CD-NTase family. A02 subfamily. A Cap2 dimer is bound on either side by a DncV monomer. Mg(2+) is required as a cofactor. Post-translationally, in bacteria expressing capV-dncV-cap2-cap3, this protein is conjugated to about 130 cellular proteins by Cap2, most of which are involved in metabolism; more conjugated protein is found in the absence of Cap3. Most conjugation occurs via an isopeptide bond with the epsilon-amine of Lys on the target protein, but Cys-conjugation also occurs, including to Cap2. Conjugation or deconjugation from cellular proteins does not change the DncV activity in vitro, but does so in vivo during infection. (Microbial infection) During phage T4 infection is conjugated to at least 2 T4 proteins (fibritin (wac) and dexA.2).

It carries out the reaction GTP + ATP = 3',3'-cGAMP + 2 diphosphate. With respect to regulation, primed for activation by Cap2 which conjugates it to cellular proteins. cGAMP production is induced in phage T4 infected cells in a manner that requires Cap2 and Cap3, as well as a C-terminal Ala or Gly residue in this protein. Functionally, cyclic nucleotide synthase (second messenger synthase) of a CBASS antivirus system. CBASS (cyclic oligonucleotide-based antiphage signaling system) provides immunity against bacteriophages. The CD-NTase protein (DncV, this protein) synthesizes cyclic nucleotides in response to infection; these serve as specific second messenger signals. The signals activate a diverse range of effectors, leading to bacterial cell death and thus abortive phage infection. A type II-A(GA) CBASS system. In terms of biological role, catalyzes the synthesis of 3',3'-cyclic GMP-AMP (cGAMP) from GTP and ATP, a second messenger in cell signal transduction. Its product controls the activity of cGAMP-activated phospholipase CapV, a patatin-like lipase that is a direct cGAMP receptor encoded in the dncV operon. Its function is as follows. Protects E.coli against phage infection. When capV and dncV are introduced in E.coli MG1655 there is 1000-fold protection against phage P1; protection against other phage (T2, T4, T5, T6 and lambda-vir) requires the 2 subsequent genes (cap2 and cap3). In another paper the capV-dncV-cap2-cap3 operon gives 10(4)-10(5)-fold protection against phages lambda, T2, T4 and T6, about 1000-fold protection against P1 and 10-fold protection against T5. The sequence is that of Cyclic GMP-AMP synthase from Escherichia coli (strain TW11681).